The sequence spans 717 residues: Epithelial splicing regulatory protein 2 (717 aa).

A compositionally biased stretch (pro residues) spans Met-1–Asp-14. The interval Met-1–Pro-23 is disordered. A Phosphoserine modification is found at Ser-83. RRM domains follow at residues Thr-247–Ser-343, Val-348–Ala-428, and Asp-465–Thr-545. Ser-563 is subject to Phosphoserine.

It belongs to the ESRP family. As to quaternary structure, interacts with RBPMS. In terms of tissue distribution, epithelial cell-specific.

The protein resides in the nucleus. In terms of biological role, mRNA splicing factor that regulates the formation of epithelial cell-specific isoforms. Specifically regulates the expression of FGFR2-IIIb, an epithelial cell-specific isoform of FGFR2. Also regulates the splicing of CD44, CTNND1, ENAH, 3 transcripts that undergo changes in splicing during the epithelial-to-mesenchymal transition (EMT). Acts by directly binding specific sequences in mRNAs. Binds the GU-rich sequence motifs in the ISE/ISS-3, a cis-element regulatory region present in the mRNA of FGFR2. This chain is Epithelial splicing regulatory protein 2 (Esrp2), found in Mus musculus (Mouse).